The primary structure comprises 205 residues: Putative 3-methyladenine DNA glycosylase (205 aa).

It belongs to the DNA glycosylase MPG family.

The sequence is that of Putative 3-methyladenine DNA glycosylase from Staphylococcus epidermidis (strain ATCC 35984 / DSM 28319 / BCRC 17069 / CCUG 31568 / BM 3577 / RP62A).